Reading from the N-terminus, the 65-residue chain is Large ribosomal subunit protein uL29 (65 aa).

It belongs to the universal ribosomal protein uL29 family.

The chain is Large ribosomal subunit protein uL29 from Lactobacillus acidophilus (strain ATCC 700396 / NCK56 / N2 / NCFM).